Reading from the N-terminus, the 262-residue chain is Carbonic anhydrase 1 (262 aa).

Ala-2 is subject to N-acetylalanine. The region spanning Leu-4 to Phe-261 is the Alpha-carbonic anhydrase domain. His-65 acts as the Proton donor/acceptor in catalysis. Zn(2+)-binding residues include His-95, His-97, and His-120. Substrate is bound by residues Thr-200 and Thr-200 to His-201.

Belongs to the alpha-carbonic anhydrase family. Zn(2+) is required as a cofactor.

The protein resides in the cytoplasm. It carries out the reaction hydrogencarbonate + H(+) = CO2 + H2O. It catalyses the reaction urea = cyanamide + H2O. With respect to regulation, inhibited by acetazolamide. Catalyzes the reversible hydration of carbon dioxide. Can hydrate cyanamide to urea. In Monodelphis domestica (Gray short-tailed opossum), this protein is Carbonic anhydrase 1 (CA1).